We begin with the raw amino-acid sequence, 132 residues long: Small ribosomal subunit protein uS8 (132 aa).

Belongs to the universal ribosomal protein uS8 family. Part of the 30S ribosomal subunit. Contacts proteins S5 and S12.

Its function is as follows. One of the primary rRNA binding proteins, it binds directly to 16S rRNA central domain where it helps coordinate assembly of the platform of the 30S subunit. This chain is Small ribosomal subunit protein uS8, found in Bartonella tribocorum (strain CIP 105476 / IBS 506).